Reading from the N-terminus, the 305-residue chain is D-alanine--D-alanine ligase (305 aa).

The ATP-grasp domain occupies 104–300 (RALFASAGIP…FPELVRWMVE (197 aa)). 131–181 (LPRPFVVKPLNEGSSVGVFIVRDNQPSPLPDWPFDADEVLVESFIPGRELT) lines the ATP pocket. Mg(2+) is bound by residues Asp-249, Glu-267, and Asn-269.

Belongs to the D-alanine--D-alanine ligase family. The cofactor is Mg(2+). Mn(2+) serves as cofactor.

Its subcellular location is the cytoplasm. The enzyme catalyses 2 D-alanine + ATP = D-alanyl-D-alanine + ADP + phosphate + H(+). It participates in cell wall biogenesis; peptidoglycan biosynthesis. In terms of biological role, cell wall formation. This is D-alanine--D-alanine ligase from Paramagnetospirillum magneticum (strain ATCC 700264 / AMB-1) (Magnetospirillum magneticum).